Here is a 293-residue protein sequence, read N- to C-terminus: Small ribosomal subunit biogenesis GTPase RsgA (293 aa).

Residues 63–223 (KNELVRPPIA…VADTPGFSSL (161 aa)) form the CP-type G domain. GTP is bound by residues 112 to 115 (SKMD) and 166 to 174 (GQSGVGKSS). Zn(2+)-binding residues include C247, C252, H254, and C260.

This sequence belongs to the TRAFAC class YlqF/YawG GTPase family. RsgA subfamily. Monomer. Associates with 30S ribosomal subunit, binds 16S rRNA. Zn(2+) serves as cofactor.

It is found in the cytoplasm. In terms of biological role, one of several proteins that assist in the late maturation steps of the functional core of the 30S ribosomal subunit. Helps release RbfA from mature subunits. May play a role in the assembly of ribosomal proteins into the subunit. Circularly permuted GTPase that catalyzes slow GTP hydrolysis, GTPase activity is stimulated by the 30S ribosomal subunit. This is Small ribosomal subunit biogenesis GTPase RsgA from Bacillus cereus (strain ATCC 10987 / NRS 248).